Reading from the N-terminus, the 481-residue chain is Aromatic amino acid aminotransferase DDB_G0272014 (481 aa).

Position 300 is an N6-(pyridoxal phosphate)lysine (lysine 300).

The protein belongs to the class-I pyridoxal-phosphate-dependent aminotransferase family. It depends on pyridoxal 5'-phosphate as a cofactor.

It is found in the cytoplasm. It carries out the reaction an aromatic L-alpha-amino acid + 2-oxoglutarate = an aromatic oxo-acid + L-glutamate. Its function is as follows. Has aromatic amino acid transaminase activity. The polypeptide is Aromatic amino acid aminotransferase DDB_G0272014 (Dictyostelium discoideum (Social amoeba)).